Reading from the N-terminus, the 142-residue chain is Large ribosomal subunit protein uL22c (142 aa).

This sequence belongs to the universal ribosomal protein uL22 family. In terms of assembly, part of the 50S ribosomal subunit.

The protein localises to the plastid. It is found in the chloroplast. Functionally, this protein binds specifically to 23S rRNA. The globular domain of the protein is located near the polypeptide exit tunnel on the outside of the subunit, while an extended beta-hairpin is found that lines the wall of the exit tunnel in the center of the 70S ribosome. The polypeptide is Large ribosomal subunit protein uL22c (rpl22) (Ceratophyllum demersum (Rigid hornwort)).